The sequence spans 439 residues: Synaptotagmin-B (439 aa).

At 1–74 (MQAEMNQSAE…KEKFMNELQK (74 aa)) the chain is on the vesicular side. N-linked (GlcNAc...) asparagine glycosylation is found at Asn6 and Asn46. Residues 75-101 (IPLPPWALIAIAIVSGLLLLTCCLCIC) traverse the membrane as a helical segment. Residues 102–439 (KKCCCKKKKN…EVDVALGLKK (338 aa)) lie on the Cytoplasmic side of the membrane. The tract at residues 113–155 (KEKGKGKKNDINMKDVKGSGGNQDDDDAETGLTEGEDKEEEAK) is disordered. Positions 119–129 (KKNDINMKDVK) are enriched in basic and acidic residues. Over residues 135–151 (QDDDDAETGLTEGEDKE) the composition is skewed to acidic residues. The tract at residues 153-399 (EAKEEEKLGK…AIGKIFVGSN (247 aa)) is phospholipid binding. C2 domains follow at residues 159–278 (KLGK…EEWR) and 290–423 (KLGD…AQWH). Ca(2+) is bound by residues Leu189, Asp190, Asp196, Asp248, Phe249, Asp250, Ser253, Lys254, Asp256, Asp321, Asp327, Asp381, Asp383, and Asp389.

This sequence belongs to the synaptotagmin family. In terms of assembly, homodimer or homotrimer (possible). Ca(2+) is required as a cofactor. Spinal cord, brainstem, midbrain and electric organ.

Its subcellular location is the cytoplasmic vesicle. It localises to the secretory vesicle. It is found in the synaptic vesicle membrane. The protein localises to the synapse. In terms of biological role, may have a regulatory role in the membrane interactions during trafficking of synaptic vesicles at the active zone of the synapse. It binds acidic phospholipids with a specificity that requires the presence of both an acidic head group and a diacyl backbone. The sequence is that of Synaptotagmin-B (P65-B) from Diplobatis ommata (Ocellated electric ray).